We begin with the raw amino-acid sequence, 470 residues long: Argininosuccinate lyase (470 aa).

This sequence belongs to the lyase 1 family. Argininosuccinate lyase subfamily.

Its subcellular location is the cytoplasm. The enzyme catalyses 2-(N(omega)-L-arginino)succinate = fumarate + L-arginine. It functions in the pathway amino-acid biosynthesis; L-arginine biosynthesis; L-arginine from L-ornithine and carbamoyl phosphate: step 3/3. This chain is Argininosuccinate lyase, found in Leptospira interrogans serogroup Icterohaemorrhagiae serovar copenhageni (strain Fiocruz L1-130).